A 117-amino-acid polypeptide reads, in one-letter code: Large ribosomal subunit protein uL18 (117 aa).

This sequence belongs to the universal ribosomal protein uL18 family. Part of the 50S ribosomal subunit; part of the 5S rRNA/L5/L18/L25 subcomplex. Contacts the 5S and 23S rRNAs.

This is one of the proteins that bind and probably mediate the attachment of the 5S RNA into the large ribosomal subunit, where it forms part of the central protuberance. This Photorhabdus laumondii subsp. laumondii (strain DSM 15139 / CIP 105565 / TT01) (Photorhabdus luminescens subsp. laumondii) protein is Large ribosomal subunit protein uL18.